The following is a 45-amino-acid chain: Enterotoxin (45 aa).

As to quaternary structure, one of 3 components (of 35, 45 and 105 kDa) of the enterotoxin.

Its function is as follows. One of 3 components required for cytotoxicity (tested in African green monkey Vero cells); the complex is not hemolytic. The protein is Enterotoxin of Bacillus cereus.